A 298-amino-acid polypeptide reads, in one-letter code: GTPase Era (298 aa).

The 168-residue stretch at 3 to 170 (KSGFVAILGR…VQLLKDNLEE (168 aa)) folds into the Era-type G domain. Positions 11-18 (GRPNVGKS) are G1. 11-18 (GRPNVGKS) contributes to the GTP binding site. The tract at residues 37 to 41 (QTTRN) is G2. Residues 58-61 (DTPG) are G3. GTP-binding positions include 58 to 62 (DTPGI) and 120 to 123 (NKID). Positions 120–123 (NKID) are G4. The G5 stretch occupies residues 149–151 (ISA). Positions 201–279 (TQQEVPHSVA…YLETWVKVKK (79 aa)) constitute a KH type-2 domain.

Belongs to the TRAFAC class TrmE-Era-EngA-EngB-Septin-like GTPase superfamily. Era GTPase family. As to quaternary structure, monomer.

It is found in the cytoplasm. Its subcellular location is the cell membrane. Functionally, an essential GTPase that binds both GDP and GTP, with rapid nucleotide exchange. Plays a role in 16S rRNA processing and 30S ribosomal subunit biogenesis and possibly also in cell cycle regulation and energy metabolism. This Streptococcus equi subsp. equi (strain 4047) protein is GTPase Era.